Reading from the N-terminus, the 89-residue chain is Probable Fe(2+)-trafficking protein (89 aa).

The protein belongs to the Fe(2+)-trafficking protein family.

Could be a mediator in iron transactions between iron acquisition and iron-requiring processes, such as synthesis and/or repair of Fe-S clusters in biosynthetic enzymes. This is Probable Fe(2+)-trafficking protein from Legionella pneumophila (strain Lens).